Consider the following 467-residue polypeptide: tRNA(Ile)-lysidine synthase (467 aa).

26–31 (SGGPDS) lines the ATP pocket.

This sequence belongs to the tRNA(Ile)-lysidine synthase family.

It is found in the cytoplasm. The enzyme catalyses cytidine(34) in tRNA(Ile2) + L-lysine + ATP = lysidine(34) in tRNA(Ile2) + AMP + diphosphate + H(+). Its function is as follows. Ligates lysine onto the cytidine present at position 34 of the AUA codon-specific tRNA(Ile) that contains the anticodon CAU, in an ATP-dependent manner. Cytidine is converted to lysidine, thus changing the amino acid specificity of the tRNA from methionine to isoleucine. The protein is tRNA(Ile)-lysidine synthase of Clostridium tetani (strain Massachusetts / E88).